An 833-amino-acid polypeptide reads, in one-letter code: MAYYNHKEIEPKWQKYWAEHHTFKTGTDKDKPNFYALDMFPYPSGAGLHVGHPEGYTATDILSRYKRTQGYNVLHPMGWDAFGLPAEQYAMDTGNDPADFTAENIANFKRQINALGFSYDWDREINTTDPNYYKWTQWIFTKLYEKGLAYEAEVPVNWVEELGTAIANEEVLPDGTSERGGYPVVRKPMRQWMLKITAYAERLLNDLEELDWPESIKDMQRNWIGKSTGANVTFKIKDTDKDFTVFTTRPDTLFGATYAVLAPEHALVDAITSAEQAQAVADYKHAASLKSDLARTDLAKDKTGVWTGAYAINPVNGKEIPIWIADYVLASYGTGAIMAVPAHDERDWEFAKQFDLEIIPVLEGGNVAEAAYTEDGPHINSGFLDGLDKAAAIDKMVAWLEAEGVGNEKVTYRLRDWLFSRQRYWGEPIPIIHWEDGTSTAVPENELPLVLPVTKDIRPSGTGESPLANLTDWLEVTREDGVKGRRETNTMPQWAGSSWYYLRYIDPHNNEKLADEELLKAWLPVDIYIGGAEHAVLHLLYARFWHKFLYDIGVVPTKEPFQKLFNQGMILGTSYRDSRCALVATDKVEKRDGSFFNIETGEELEQAPAKMSKSLKNVVNPDDVVEQYGADTLRVYEMFMGPLDASIAWSEEGLEGSRKFLDRVYRLFNSKELVTENSGALDKVYHETVKSVTEQIEELKFNTAIAQLMIFVNAANKEEKLYVEYAKGFIQLLAPFAPHLAEELWQAVAQTGESISYVTWPTYDESKLVEAEVEIVVQIKGKVRAKLVVAKDLSREELQEIALSDEKIKSEIAGKEIVKVISVPNKLVNIVVK.

Residues 41 to 52 carry the 'HIGH' region motif; it reads PYPSGAGLHVGH. The 'KMSKS' region signature appears at 610 to 614; sequence KMSKS. Lys613 lines the ATP pocket.

It belongs to the class-I aminoacyl-tRNA synthetase family.

The protein resides in the cytoplasm. It catalyses the reaction tRNA(Leu) + L-leucine + ATP = L-leucyl-tRNA(Leu) + AMP + diphosphate. In Streptococcus sanguinis (strain SK36), this protein is Leucine--tRNA ligase.